The chain runs to 918 residues: Isoleucine--tRNA ligase (918 aa).

The short motif at 57 to 67 (PYANGDIHIGH) is the 'HIGH' region element. An L-isoleucyl-5'-AMP-binding site is contributed by Glu-568. A 'KMSKS' region motif is present at residues 609-613 (KMSKS). Lys-612 contributes to the ATP binding site. Zn(2+) contacts are provided by Cys-894, Cys-897, Cys-909, and Cys-912.

It belongs to the class-I aminoacyl-tRNA synthetase family. IleS type 1 subfamily. Monomer. Zn(2+) is required as a cofactor.

It localises to the cytoplasm. It catalyses the reaction tRNA(Ile) + L-isoleucine + ATP = L-isoleucyl-tRNA(Ile) + AMP + diphosphate. Catalyzes the attachment of isoleucine to tRNA(Ile). As IleRS can inadvertently accommodate and process structurally similar amino acids such as valine, to avoid such errors it has two additional distinct tRNA(Ile)-dependent editing activities. One activity is designated as 'pretransfer' editing and involves the hydrolysis of activated Val-AMP. The other activity is designated 'posttransfer' editing and involves deacylation of mischarged Val-tRNA(Ile). The polypeptide is Isoleucine--tRNA ligase (Sulfurovum sp. (strain NBC37-1)).